The sequence spans 101 residues: Biogenesis of lysosome-related organelles complex 1 subunit BLS1 (101 aa).

Belongs to the BLOC1S1 family. As to quaternary structure, component of the biogenesis of lysosome-related organelles complex-1 (BLOC-1).

The protein resides in the endosome. In terms of biological role, component of the biogenesis of lysosome-related organelles complex-1 (BLOC-1), a complex involved in endosomal cargo sorting. The sequence is that of Biogenesis of lysosome-related organelles complex 1 subunit BLS1 (BLS1) from Zygosaccharomyces rouxii (strain ATCC 2623 / CBS 732 / NBRC 1130 / NCYC 568 / NRRL Y-229).